A 411-amino-acid chain; its full sequence is Tyrosine--tRNA ligase (411 aa).

A 'HIGH' region motif is present at residues 50–59 (PTRPDLHLGH). The short motif at 236-240 (KMSKS) is the 'KMSKS' region element. Lys239 contacts ATP. Positions 345 to 409 (VSMAKLVVLA…GKDKFARLVL (65 aa)) constitute an S4 RNA-binding domain.

It belongs to the class-I aminoacyl-tRNA synthetase family. TyrS type 2 subfamily. As to quaternary structure, homodimer.

Its subcellular location is the cytoplasm. It catalyses the reaction tRNA(Tyr) + L-tyrosine + ATP = L-tyrosyl-tRNA(Tyr) + AMP + diphosphate + H(+). In terms of biological role, catalyzes the attachment of tyrosine to tRNA(Tyr) in a two-step reaction: tyrosine is first activated by ATP to form Tyr-AMP and then transferred to the acceptor end of tRNA(Tyr). In Deinococcus radiodurans (strain ATCC 13939 / DSM 20539 / JCM 16871 / CCUG 27074 / LMG 4051 / NBRC 15346 / NCIMB 9279 / VKM B-1422 / R1), this protein is Tyrosine--tRNA ligase.